A 536-amino-acid chain; its full sequence is Suppressor of cytokine signaling 5 (536 aa).

The required for interaction with IL4R stretch occupies residues 1–50 (MDKVGKMWNNFKYRCQNLFGHEGGSRSENVDMNSNRCLSVKEKNISIGDS). The interval 115–175 (SRHAPWGGKK…SVSSRTVGSR (61 aa)) is disordered. Over residues 158 to 169 (VSSVHDMDSVSS) the composition is skewed to low complexity. An SH2 domain is found at 381–476 (CYWGVMDRYE…FFEPLLTISL (96 aa)). One can recognise an SOCS box domain in the interval 471 to 520 (LLTISLNRTFPFSLQYICRAVICRCTTYDGIDGLPLPSMLQDFLKEYHYK).

As to quaternary structure, interacts with IL4R; inhibits IL4 signaling. Interacts with EGFR. Interacts with ELOB and ELOC; mediates EGFR ubiquitination and degradation. Post-translationally, phosphorylated. Phosphorylation is induced by EGF.

Its pathway is protein modification; protein ubiquitination. SOCS family proteins form part of a classical negative feedback system that regulates cytokine signal transduction. May be a substrate-recognition component of a SCF-like ECS (Elongin BC-CUL2/5-SOCS-box protein) E3 ubiquitin-protein ligase complex which mediates the ubiquitination and subsequent proteasomal degradation of target proteins. Inhibits for instance EGF signaling by mediating the degradation of the EGF receptor/EGFR. Involved in the regulation of T-helper cell differentiation by inhibiting of the IL4 signaling pathway which promotes differentiation into the Th2 phenotype. Can also partially inhibit IL6 and LIF signaling. This chain is Suppressor of cytokine signaling 5 (SOCS5), found in Homo sapiens (Human).